Here is a 297-residue protein sequence, read N- to C-terminus: GTP cyclohydrolase FolE2 (297 aa).

Disordered regions lie at residues 1 to 21 (MTHA…SERD) and 180 to 207 (IRAE…RERP).

The protein belongs to the GTP cyclohydrolase IV family.

It catalyses the reaction GTP + H2O = 7,8-dihydroneopterin 3'-triphosphate + formate + H(+). The protein operates within cofactor biosynthesis; 7,8-dihydroneopterin triphosphate biosynthesis; 7,8-dihydroneopterin triphosphate from GTP: step 1/1. In terms of biological role, converts GTP to 7,8-dihydroneopterin triphosphate. In Methylibium petroleiphilum (strain ATCC BAA-1232 / LMG 22953 / PM1), this protein is GTP cyclohydrolase FolE2.